The primary structure comprises 74 residues: Sec-independent protein translocase protein TatA (74 aa).

A helical membrane pass occupies residues 1 to 21; the sequence is MGSIGMTELLLIFGIIVLLFG.

Belongs to the TatA/E family. As to quaternary structure, forms a complex with TatC.

The protein localises to the cell inner membrane. In terms of biological role, part of the twin-arginine translocation (Tat) system that transports large folded proteins containing a characteristic twin-arginine motif in their signal peptide across membranes. TatA could form the protein-conducting channel of the Tat system. This chain is Sec-independent protein translocase protein TatA, found in Sulfurihydrogenibium sp. (strain YO3AOP1).